A 69-amino-acid chain; its full sequence is Large ribosomal subunit protein uL29 (69 aa).

It belongs to the universal ribosomal protein uL29 family.

The protein is Large ribosomal subunit protein uL29 of Methylobacillus flagellatus (strain ATCC 51484 / DSM 6875 / VKM B-1610 / KT).